A 289-amino-acid polypeptide reads, in one-letter code: Serine/threonine-protein phosphatase Pgam5, mitochondrial (289 aa).

A helical membrane pass occupies residues 7 to 23 (FACGTGAGLAAYYLQRL).

Belongs to the phosphoglycerate mutase family. BPG-dependent PGAM subfamily. Interacts with Pk92B/ASK1.

The protein localises to the mitochondrion outer membrane. The enzyme catalyses O-phospho-L-seryl-[protein] + H2O = L-seryl-[protein] + phosphate. It catalyses the reaction O-phospho-L-threonyl-[protein] + H2O = L-threonyl-[protein] + phosphate. Its function is as follows. Displays phosphatase activity for serine/threonine residues, and dephosphorylates and activates Pk92B kinase. Has apparently no phosphoglycerate mutase activity. This chain is Serine/threonine-protein phosphatase Pgam5, mitochondrial, found in Drosophila simulans (Fruit fly).